Here is a 344-residue protein sequence, read N- to C-terminus: Aspartate-semialdehyde dehydrogenase (344 aa).

NADP(+) is bound by residues 10–13 (TGQV) and 38–39 (RS). A phosphate-binding site is contributed by Arg-101. Cys-131 acts as the Acyl-thioester intermediate in catalysis. Residue Gln-158 participates in substrate binding. An NADP(+)-binding site is contributed by 161–162 (SG). Residue Lys-228 participates in phosphate binding. Position 250 (Arg-250) interacts with substrate. Residue His-257 is the Proton acceptor of the active site. An NADP(+)-binding site is contributed by Asn-326.

Belongs to the aspartate-semialdehyde dehydrogenase family. Homodimer.

The enzyme catalyses L-aspartate 4-semialdehyde + phosphate + NADP(+) = 4-phospho-L-aspartate + NADPH + H(+). Its pathway is amino-acid biosynthesis; L-lysine biosynthesis via DAP pathway; (S)-tetrahydrodipicolinate from L-aspartate: step 2/4. It functions in the pathway amino-acid biosynthesis; L-methionine biosynthesis via de novo pathway; L-homoserine from L-aspartate: step 2/3. The protein operates within amino-acid biosynthesis; L-threonine biosynthesis; L-threonine from L-aspartate: step 2/5. Its function is as follows. Catalyzes the NADPH-dependent formation of L-aspartate-semialdehyde (L-ASA) by the reductive dephosphorylation of L-aspartyl-4-phosphate. The polypeptide is Aspartate-semialdehyde dehydrogenase (Corynebacterium melassecola).